Reading from the N-terminus, the 482-residue chain is Glutamate--tRNA ligase 2 (482 aa).

The 'HIGH' region signature appears at 8 to 18 (PSPTGQLHIGG). The 'KMSKS' region signature appears at 249–253 (KLSKR). Residue Lys252 participates in ATP binding.

Belongs to the class-I aminoacyl-tRNA synthetase family. Glutamate--tRNA ligase type 1 subfamily. In terms of assembly, monomer.

It is found in the cytoplasm. It carries out the reaction tRNA(Glu) + L-glutamate + ATP = L-glutamyl-tRNA(Glu) + AMP + diphosphate. Catalyzes the attachment of glutamate to tRNA(Glu) in a two-step reaction: glutamate is first activated by ATP to form Glu-AMP and then transferred to the acceptor end of tRNA(Glu). In Caldicellulosiruptor saccharolyticus (strain ATCC 43494 / DSM 8903 / Tp8T 6331), this protein is Glutamate--tRNA ligase 2.